The sequence spans 257 residues: Imidazole glycerol phosphate synthase subunit HisF (257 aa).

Residues aspartate 11 and aspartate 130 contribute to the active site.

It belongs to the HisA/HisF family. As to quaternary structure, heterodimer of HisH and HisF.

Its subcellular location is the cytoplasm. It carries out the reaction 5-[(5-phospho-1-deoxy-D-ribulos-1-ylimino)methylamino]-1-(5-phospho-beta-D-ribosyl)imidazole-4-carboxamide + L-glutamine = D-erythro-1-(imidazol-4-yl)glycerol 3-phosphate + 5-amino-1-(5-phospho-beta-D-ribosyl)imidazole-4-carboxamide + L-glutamate + H(+). Its pathway is amino-acid biosynthesis; L-histidine biosynthesis; L-histidine from 5-phospho-alpha-D-ribose 1-diphosphate: step 5/9. Functionally, IGPS catalyzes the conversion of PRFAR and glutamine to IGP, AICAR and glutamate. The HisF subunit catalyzes the cyclization activity that produces IGP and AICAR from PRFAR using the ammonia provided by the HisH subunit. This is Imidazole glycerol phosphate synthase subunit HisF from Shewanella denitrificans (strain OS217 / ATCC BAA-1090 / DSM 15013).